Reading from the N-terminus, the 422-residue chain is UDP-N-acetylglucosamine 1-carboxyvinyltransferase (422 aa).

22–23 (KN) contacts phosphoenolpyruvate. Arginine 93 serves as a coordination point for UDP-N-acetyl-alpha-D-glucosamine. Cysteine 117 serves as the catalytic Proton donor. Position 117 is a 2-(S-cysteinyl)pyruvic acid O-phosphothioketal (cysteine 117). UDP-N-acetyl-alpha-D-glucosamine is bound by residues 122 to 126 (RPVDQ), aspartate 305, and isoleucine 327.

This sequence belongs to the EPSP synthase family. MurA subfamily.

The protein resides in the cytoplasm. The catalysed reaction is phosphoenolpyruvate + UDP-N-acetyl-alpha-D-glucosamine = UDP-N-acetyl-3-O-(1-carboxyvinyl)-alpha-D-glucosamine + phosphate. It participates in cell wall biogenesis; peptidoglycan biosynthesis. Functionally, cell wall formation. Adds enolpyruvyl to UDP-N-acetylglucosamine. This is UDP-N-acetylglucosamine 1-carboxyvinyltransferase from Bordetella bronchiseptica (strain ATCC BAA-588 / NCTC 13252 / RB50) (Alcaligenes bronchisepticus).